The chain runs to 428 residues: UDP-N-acetylglucosamine 1-carboxyvinyltransferase 2 (428 aa).

Phosphoenolpyruvate is bound at residue 22–23 (KN). Arg92 contacts UDP-N-acetyl-alpha-D-glucosamine. Catalysis depends on Cys116, which acts as the Proton donor. 2-(S-cysteinyl)pyruvic acid O-phosphothioketal is present on Cys116. UDP-N-acetyl-alpha-D-glucosamine contacts are provided by residues 121 to 125 (RPIDQ), Asp304, and Ile326.

This sequence belongs to the EPSP synthase family. MurA subfamily.

The protein resides in the cytoplasm. The catalysed reaction is phosphoenolpyruvate + UDP-N-acetyl-alpha-D-glucosamine = UDP-N-acetyl-3-O-(1-carboxyvinyl)-alpha-D-glucosamine + phosphate. Its pathway is cell wall biogenesis; peptidoglycan biosynthesis. Cell wall formation. Adds enolpyruvyl to UDP-N-acetylglucosamine. The polypeptide is UDP-N-acetylglucosamine 1-carboxyvinyltransferase 2 (Geobacillus kaustophilus (strain HTA426)).